We begin with the raw amino-acid sequence, 451 residues long: Endosomal transmembrane epsin interactor 1 (451 aa).

Residues 1-29 (MILLVNLFVLLSVVCILLNLAGFILGCQG) form the signal peptide. Residues 30–85 (AQFVSSVPRCDLVDLGEGKICFCCEEFQPAKCTDKENALKLFPVQPCSAVHLLLKK) lie on the Lumenal side of the membrane. A helical membrane pass occupies residues 86–106 (VLFALCALNALTTTVCLVAAA). The Cytoplasmic portion of the chain corresponds to 107 to 451 (LRYLQIFASR…LIGVIRETVL (345 aa)). Positions 107-451 (LRYLQIFASR…LIGVIRETVL (345 aa)) are mediates interaction with EPN1. 2 short sequence motifs (PPxY; mediates interaction with ITCH) span residues 148-151 (PPSY) and 194-197 (PPPY). A compositionally biased stretch (polar residues) spans 204–213 (TDQEQESSFQ). The tract at residues 204-224 (TDQEQESSFQMPEGPETAASP) is disordered. A Glycyl lysine isopeptide (Lys-Gly) (interchain with G-Cter in ubiquitin) cross-link involves residue lysine 274. A Phosphoserine modification is found at serine 275. Residue lysine 365 forms a Glycyl lysine isopeptide (Lys-Gly) (interchain with G-Cter in ubiquitin) linkage.

The protein belongs to the ENTREP family. In terms of assembly, interacts with ITCH; enhances the ubiquitination of CXCR4 by ITCH and the subsequent endocytosis and desensitization of the receptor. Interacts with EPN1.

It is found in the early endosome membrane. The protein localises to the late endosome membrane. It localises to the recycling endosome membrane. The protein resides in the cell membrane. Its function is as follows. Functions as an activator of the E3 ubiquitin protein ligase ITCH in the ubiquitination of the CXCL12-activated CXCR4 receptor. Thereby, triggers CXCR4 endocytosis and desensitization, negatively regulating the CXCL12/CXCR4 signaling pathway. The protein is Endosomal transmembrane epsin interactor 1 of Mus musculus (Mouse).